The following is a 399-amino-acid chain: MNLHEYQAKELLAKYGIGIPAGHAALTVEEAVAGAKQLPGPLYVVKAQIHAGGRGKGKFKELGPDAKGGVRLAKSIEDVEASAREMLGNTLVTVQTGEEGKQVNRLYVTDGVDIASEYYLSMVVDRASGRVGMIVSTEGGMDIEEVAHSTPEKITTITIDPAQGFMPHHGRAVAFALKLSGDLNKQAQKLAKQLYTAFMDLDCEMLEINPLVETEDGQLLVLDTKMSIDGNALYRHKDVEEMRDETEEDPAEVEASEYDLAYIKLDGNIGCMVNGAGLAMATMDIIKLNGAFPANFLDVGGGATTEKVTAAFKIILKDPAVEGILVNIFGGIMRCDTIAEGIVVAAKEVELDVPLVVRLEGTNVEKGKDILANSGLPIVPADDLGDAARKIVAEVKQAA.

Positions 9–254 (KELLAKYGIG…ETEEDPAEVE (246 aa)) constitute an ATP-grasp domain. ATP contacts are provided by residues Lys-46, 53–55 (GRG), Val-112, and Glu-117. Residues Asn-209 and Asp-223 each contribute to the Mg(2+) site. Residues Asn-274 and 331–333 (GIM) contribute to the substrate site.

The protein belongs to the succinate/malate CoA ligase beta subunit family. As to quaternary structure, heterotetramer of two alpha and two beta subunits. Requires Mg(2+) as cofactor.

The enzyme catalyses succinate + ATP + CoA = succinyl-CoA + ADP + phosphate. The catalysed reaction is GTP + succinate + CoA = succinyl-CoA + GDP + phosphate. It functions in the pathway carbohydrate metabolism; tricarboxylic acid cycle; succinate from succinyl-CoA (ligase route): step 1/1. Functionally, succinyl-CoA synthetase functions in the citric acid cycle (TCA), coupling the hydrolysis of succinyl-CoA to the synthesis of either ATP or GTP and thus represents the only step of substrate-level phosphorylation in the TCA. The beta subunit provides nucleotide specificity of the enzyme and binds the substrate succinate, while the binding sites for coenzyme A and phosphate are found in the alpha subunit. This chain is Succinate--CoA ligase [ADP-forming] subunit beta, found in Erythrobacter litoralis (strain HTCC2594).